The chain runs to 1676 residues: DNA-directed RNA polymerase subunit beta'-beta'' (1676 aa).

Residues 1–582 (MCDAIQIRLA…FLKTTPGRII (582 aa)) are DNA-directed RNA polymerase subunit beta'. Residues Cys64, Cys66, Cys79, and Cys82 each coordinate Zn(2+). Asp454, Asp456, and Asp458 together coordinate Mg(2+). Residues 583 to 1676 (FYQQAAYHVG…IPAGTGAKYL (1094 aa)) form a DNA-directed RNA polymerase subunit beta'' region. 4 residues coordinate Zn(2+): Cys804, Cys859, Cys866, and Cys869.

This sequence in the N-terminal section; belongs to the RNA polymerase beta' chain family. RpoC1 subfamily. It in the C-terminal section; belongs to the RNA polymerase beta' chain family. RpoC2 subfamily. As to quaternary structure, in plastids the minimal PEP RNA polymerase catalytic core is composed of four subunits: alpha, beta, beta', and beta''. When a (nuclear-encoded) sigma factor is associated with the core the holoenzyme is formed, which can initiate transcription. Beta' and beta'' are fused in this algae. Mg(2+) serves as cofactor. Zn(2+) is required as a cofactor.

The protein localises to the plastid. It is found in the chloroplast. The enzyme catalyses RNA(n) + a ribonucleoside 5'-triphosphate = RNA(n+1) + diphosphate. Functionally, DNA-dependent RNA polymerase catalyzes the transcription of DNA into RNA using the four ribonucleoside triphosphates as substrates. The protein is DNA-directed RNA polymerase subunit beta'-beta'' of Cyanidioschyzon merolae (strain NIES-3377 / 10D) (Unicellular red alga).